A 785-amino-acid chain; its full sequence is 5-methyltetrahydropteroyltriglutamate--homocysteine methyltransferase (785 aa).

5-methyltetrahydropteroyltri-L-glutamate is bound by residues 15 to 18 (RELK) and Lys-121. Residues 460–462 (IGS) and Glu-513 each bind L-homocysteine. L-methionine-binding positions include 460 to 462 (IGS) and Glu-513. Residues 544-545 (RC) and Trp-590 contribute to the 5-methyltetrahydropteroyltri-L-glutamate site. Residue Asp-628 coordinates L-homocysteine. Asp-628 is a binding site for L-methionine. 5-methyltetrahydropteroyltri-L-glutamate is bound at residue Glu-634. His-670, Cys-672, and Glu-694 together coordinate Zn(2+). The active-site Proton donor is His-723. Residue Cys-755 coordinates Zn(2+).

This sequence belongs to the vitamin-B12 independent methionine synthase family. Requires Zn(2+) as cofactor.

The enzyme catalyses 5-methyltetrahydropteroyltri-L-glutamate + L-homocysteine = tetrahydropteroyltri-L-glutamate + L-methionine. It functions in the pathway amino-acid biosynthesis; L-methionine biosynthesis via de novo pathway; L-methionine from L-homocysteine (MetE route): step 1/1. In terms of biological role, catalyzes the transfer of a methyl group from 5-methyltetrahydrofolate to homocysteine resulting in methionine formation. This chain is 5-methyltetrahydropteroyltriglutamate--homocysteine methyltransferase, found in Nitratidesulfovibrio vulgaris (strain ATCC 29579 / DSM 644 / CCUG 34227 / NCIMB 8303 / VKM B-1760 / Hildenborough) (Desulfovibrio vulgaris).